Here is a 234-residue protein sequence, read N- to C-terminus: Sugar fermentation stimulation protein A (234 aa).

Residues 201–220 (LLSEAQQRGVEILAYKAELS) constitute a DNA-binding region (H-T-H motif).

This sequence belongs to the SfsA family.

Functionally, binds to DNA non-specifically. Could be a regulatory factor involved in maltose metabolism. This is Sugar fermentation stimulation protein A from Escherichia coli (strain SMS-3-5 / SECEC).